A 1819-amino-acid chain; its full sequence is U3 small nucleolar RNA-associated protein 10 (1819 aa).

An HEAT repeat occupies Leu-1779–Tyr-1817.

It belongs to the HEATR1/UTP10 family. As to quaternary structure, component of the ribosomal small subunit (SSU) processome.

It is found in the nucleus. The protein resides in the nucleolus. Its function is as follows. Involved in nucleolar processing of pre-18S ribosomal RNA. Involved in ribosome biosynthesis. In Meyerozyma guilliermondii (strain ATCC 6260 / CBS 566 / DSM 6381 / JCM 1539 / NBRC 10279 / NRRL Y-324) (Yeast), this protein is U3 small nucleolar RNA-associated protein 10.